The sequence spans 612 residues: UvrABC system protein C (612 aa).

The 79-residue stretch at 20 to 98 (THSGVYRMLD…IKQHRPKYNI (79 aa)) folds into the GIY-YIG domain. Residues 208-243 (STVLEEISAKMYQASEDMEYEKAQVYRDQLVVLRKL) enclose the UVR domain.

It belongs to the UvrC family. Interacts with UvrB in an incision complex.

It localises to the cytoplasm. Functionally, the UvrABC repair system catalyzes the recognition and processing of DNA lesions. UvrC both incises the 5' and 3' sides of the lesion. The N-terminal half is responsible for the 3' incision and the C-terminal half is responsible for the 5' incision. The protein is UvrABC system protein C of Francisella tularensis subsp. novicida (strain U112).